A 162-amino-acid chain; its full sequence is Ubiquitin-fold modifier-conjugating enzyme 1 (162 aa).

Residue Cys-115 is the Glycyl thioester intermediate of the active site.

It belongs to the ubiquitin-conjugating enzyme family. UFC1 subfamily. In terms of assembly, interacts with uba-5.

Functionally, E2-like enzyme which forms an intermediate with ufm-1. The intermediate is formed via a thioester linkage. This is Ubiquitin-fold modifier-conjugating enzyme 1 from Caenorhabditis briggsae.